The following is a 321-amino-acid chain: Putative ankyrin repeat domain-containing protein 26-like protein (321 aa).

5 ANK repeats span residues 48 to 78 (KHLGKLHRAASRGEVSKVECILSSGSADLDE), 82 to 111 (KKRTALHLACANGHPEVVALLVDRGCQLDV), 115 to 144 (KNRTALLKAVQCQEEECATILLEHGADPDL), 148 to 177 (YGNTTLHYAIYNEDIPMTKKLLLHHANIES), and 181 to 210 (DELTPFLLAVHEQKQQMEDFLRKQKENLTA). Disordered regions lie at residues 222 to 242 (EYKENETPRNPQNSNPEGTSN) and 268 to 321 (FNKP…NENI). Residues 229–242 (PRNPQNSNPEGTSN) show a composition bias toward polar residues.

This is Putative ankyrin repeat domain-containing protein 26-like protein (ANKRD26P1) from Homo sapiens (Human).